Here is a 239-residue protein sequence, read N- to C-terminus: tRNA (guanine-N(1)-)-methyltransferase (239 aa).

S-adenosyl-L-methionine is bound by residues Gly-112 and 132–137 (IGDYVL).

It belongs to the RNA methyltransferase TrmD family. In terms of assembly, homodimer.

It is found in the cytoplasm. The enzyme catalyses guanosine(37) in tRNA + S-adenosyl-L-methionine = N(1)-methylguanosine(37) in tRNA + S-adenosyl-L-homocysteine + H(+). Its function is as follows. Specifically methylates guanosine-37 in various tRNAs. The polypeptide is tRNA (guanine-N(1)-)-methyltransferase (Rhodospirillum rubrum (strain ATCC 11170 / ATH 1.1.1 / DSM 467 / LMG 4362 / NCIMB 8255 / S1)).